The sequence spans 416 residues: Adenylosuccinate synthetase (416 aa).

Residues 13–19 and 41–43 contribute to the GTP site; these read GDEGKGK and GHT. D14 acts as the Proton acceptor in catalysis. 2 residues coordinate Mg(2+): D14 and G41. IMP is bound by residues 14-17, 39-42, T126, R140, Q220, T235, and R299; these read DEGK and NAGH. The Proton donor role is filled by H42. 295 to 301 contacts substrate; it reads TTTGRRR. GTP is bound by residues R301, 327 to 329, and 405 to 407; these read KLD and STS.

It belongs to the adenylosuccinate synthetase family. In terms of assembly, homodimer. Mg(2+) serves as cofactor.

The protein localises to the cytoplasm. It catalyses the reaction IMP + L-aspartate + GTP = N(6)-(1,2-dicarboxyethyl)-AMP + GDP + phosphate + 2 H(+). The protein operates within purine metabolism; AMP biosynthesis via de novo pathway; AMP from IMP: step 1/2. Functionally, plays an important role in the de novo pathway of purine nucleotide biosynthesis. Catalyzes the first committed step in the biosynthesis of AMP from IMP. The sequence is that of Adenylosuccinate synthetase from Campylobacter curvus (strain 525.92).